The following is a 200-amino-acid chain: Synaptobrevin homolog YKT6 (200 aa).

One can recognise a Longin domain in the interval 7–129; the sequence is GVFRSGGEKA…LKMKQLDTYI (123 aa). One can recognise a v-SNARE coiled-coil homology domain in the interval 140-200; it reads AIMKVQQELD…KKSNSCCIIM (61 aa). T158 carries the post-translational modification Phosphothreonine. Residue C196 is the site of S-palmitoyl cysteine attachment. Residue C197 is modified to Cysteine methyl ester. A lipid anchor (S-farnesyl cysteine) is attached at C197. Positions 198 to 200 are cleaved as a propeptide — removed in mature form; it reads IIM.

The protein belongs to the synaptobrevin family.

The protein localises to the cell membrane. The chain is Synaptobrevin homolog YKT6 (YKT6) from Saccharomyces cerevisiae (strain ATCC 204508 / S288c) (Baker's yeast).